We begin with the raw amino-acid sequence, 131 residues long: Arsenate reductase (131 aa).

Active-site nucleophile residues include Cys10, Cys82, and Cys89. Intrachain disulfides connect Cys10-Cys82 and Cys82-Cys89.

The protein belongs to the low molecular weight phosphotyrosine protein phosphatase family. Thioredoxin-coupled ArsC subfamily.

It localises to the cytoplasm. It carries out the reaction arsenate + [thioredoxin]-dithiol + H(+) = arsenite + [thioredoxin]-disulfide + H2O. Functionally, catalyzes the reduction of arsenate [As(V)] to arsenite [As(III)]. The protein is Arsenate reductase of Staphylococcus aureus (strain bovine RF122 / ET3-1).